Consider the following 200-residue polypeptide: NADH-quinone oxidoreductase subunit C (200 aa).

It belongs to the complex I 30 kDa subunit family. As to quaternary structure, NDH-1 is composed of 14 different subunits. Subunits NuoB, C, D, E, F, and G constitute the peripheral sector of the complex.

The protein localises to the cell inner membrane. It carries out the reaction a quinone + NADH + 5 H(+)(in) = a quinol + NAD(+) + 4 H(+)(out). Functionally, NDH-1 shuttles electrons from NADH, via FMN and iron-sulfur (Fe-S) centers, to quinones in the respiratory chain. The immediate electron acceptor for the enzyme in this species is believed to be ubiquinone. Couples the redox reaction to proton translocation (for every two electrons transferred, four hydrogen ions are translocated across the cytoplasmic membrane), and thus conserves the redox energy in a proton gradient. The protein is NADH-quinone oxidoreductase subunit C of Burkholderia ambifaria (strain MC40-6).